Consider the following 222-residue polypeptide: Large ribosomal subunit protein uL4 (222 aa).

Belongs to the universal ribosomal protein uL4 family. Part of the 50S ribosomal subunit.

Its function is as follows. One of the primary rRNA binding proteins, this protein initially binds near the 5'-end of the 23S rRNA. It is important during the early stages of 50S assembly. It makes multiple contacts with different domains of the 23S rRNA in the assembled 50S subunit and ribosome. In terms of biological role, forms part of the polypeptide exit tunnel. This chain is Large ribosomal subunit protein uL4, found in Chlamydia trachomatis serovar L2 (strain ATCC VR-902B / DSM 19102 / 434/Bu).